Reading from the N-terminus, the 245-residue chain is DNA terminal protein (245 aa).

The short motif at 4–55 (KRLKKKLETKRKKSLLVSEGYSKKETKKLKGRELETVYKKKAHNRKNRERAR) is the Nuclear localization signal element. The residue at position 194 (Tyr-194) is an O-(5'-phospho-DNA)-tyrosine.

Interacts with the DNA-binding protein P1.

It localises to the virion. In terms of biological role, acts as a primer for viral genomic replication. DNA terminal protein is covalently linked to the 5'-ends of both strands of the genome through a phosphodiester bond between the beta-hydroxyl group of a tyrosine residue and the 5'-phosphate of the terminal deoxythymidylate. This protein is essential for DNA replication and is involved in the priming of DNA elongation. This Bacillus thuringiensis (Bacillus thuringiensis bacteriophage Bam35c) protein is DNA terminal protein.